The sequence spans 188 residues: UPF0157 protein VC_A0354 (188 aa).

Belongs to the UPF0157 (GrpB) family.

This is UPF0157 protein VC_A0354 from Vibrio cholerae serotype O1 (strain ATCC 39315 / El Tor Inaba N16961).